The sequence spans 432 residues: Tubulin-specific chaperone cofactor E-like protein (432 aa).

LRR repeat units lie at residues 69 to 94 (ASHVSEADLGWNQISKWSDIACILKN), 95 to 117 (LPHLRVLNIGHNPLNPVIDHELP), 118 to 140 (VSTLHTIILNGTHLPFKTLQSFL), 143 to 167 (LPKVTELHMSDNQFNDDDDCDEPIS), 168 to 191 (TTVRTVHLNRCGFLKWSSVMNVVK), 193 to 217 (FPNVCSVFVCENPLKDVTHCKHFEQ), and 218 to 242 (LPFWNFLNLAKTSIDSWDSLDQLNR). The LRRCT stretch occupies residues 254 to 295 (IPLLDALTNEERLHLIIGRLHHLRVLNGSKISSEQREQSERF). Positions 324–415 (VTIDLTPKKE…GDSFLVQEKI (92 aa)) are ubiquitin-like (UBL).

It is found in the cytoplasm. Its subcellular location is the cytoskeleton. Acts as a regulator of tubulin stability. Involved in microtubule-dependent neuronal function. May be involved in tubulin acetylation/deacetylation pathway. This Caenorhabditis elegans protein is Tubulin-specific chaperone cofactor E-like protein.